The chain runs to 465 residues: Probable oxidoreductase AIM17 (465 aa).

The N-terminal 16 residues, 1–16, are a transit peptide targeting the mitochondrion; it reads MLRSNLCRGSRILARL. The Fe cation site is built by His-246, Asp-248, and His-428.

The protein belongs to the gamma-BBH/TMLD family. It depends on Fe(2+) as a cofactor. Requires L-ascorbate as cofactor.

Its subcellular location is the mitochondrion. This is Probable oxidoreductase AIM17 (AIM17) from Saccharomyces cerevisiae (strain ATCC 204508 / S288c) (Baker's yeast).